The chain runs to 401 residues: Argininosuccinate synthase (401 aa).

Residues 7–15 and Ala34 each bind ATP; that span reads AYSGGLDTS. L-citrulline contacts are provided by Tyr85 and Ser90. ATP is bound at residue Gly115. 3 residues coordinate L-aspartate: Thr117, Asn121, and Asp122. Residue Asn121 participates in L-citrulline binding. Residues Arg125, Ser174, Ser183, Glu259, and Tyr271 each coordinate L-citrulline.

It belongs to the argininosuccinate synthase family. Type 1 subfamily. In terms of assembly, homotetramer.

The protein resides in the cytoplasm. It catalyses the reaction L-citrulline + L-aspartate + ATP = 2-(N(omega)-L-arginino)succinate + AMP + diphosphate + H(+). It participates in amino-acid biosynthesis; L-arginine biosynthesis; L-arginine from L-ornithine and carbamoyl phosphate: step 2/3. The sequence is that of Argininosuccinate synthase from Pelotomaculum thermopropionicum (strain DSM 13744 / JCM 10971 / SI).